Consider the following 737-residue polypeptide: Polyribonucleotide nucleotidyltransferase (737 aa).

Mg(2+) contacts are provided by Asp489 and Asp495. A KH domain is found at Pro556–Ile615. Residues Asp625 to Lys693 form the S1 motif domain. A disordered region spans residues Ser691–Glu737. Residues Pro700–Pro714 are compositionally biased toward basic and acidic residues. Over residues His715–Lys724 the composition is skewed to basic residues. Basic and acidic residues predominate over residues Pro725–Glu737.

Belongs to the polyribonucleotide nucleotidyltransferase family. Mg(2+) serves as cofactor.

It localises to the cytoplasm. The enzyme catalyses RNA(n+1) + phosphate = RNA(n) + a ribonucleoside 5'-diphosphate. Involved in mRNA degradation. Catalyzes the phosphorolysis of single-stranded polyribonucleotides processively in the 3'- to 5'-direction. In Streptococcus pneumoniae (strain 70585), this protein is Polyribonucleotide nucleotidyltransferase.